Consider the following 202-residue polypeptide: Imidazoleglycerol-phosphate dehydratase (202 aa).

Belongs to the imidazoleglycerol-phosphate dehydratase family.

The protein resides in the cytoplasm. The enzyme catalyses D-erythro-1-(imidazol-4-yl)glycerol 3-phosphate = 3-(imidazol-4-yl)-2-oxopropyl phosphate + H2O. It participates in amino-acid biosynthesis; L-histidine biosynthesis; L-histidine from 5-phospho-alpha-D-ribose 1-diphosphate: step 6/9. The sequence is that of Imidazoleglycerol-phosphate dehydratase from Acinetobacter baylyi (strain ATCC 33305 / BD413 / ADP1).